The primary structure comprises 255 residues: MASPREENVYMANVADEAERYEEMVEFMEKVVAALNGEELTVEERNLLSVAYKNVIGARRASWRIISSIEQKEESRGNEDHVASIKKYRSQIENELTSICNGILKLLDSKLIGSAATGDSKVFYLKMKGDYYRYLAEFKTGTERKEAAENTLSAYKSAQDIANGELAPTHPIRLGLALNFSVFYYEILNSPDRACNLAKQAFDEAIAELDTLGEESYKDSTLIMQLLRDNLTLWTSDMQDDGTDEIKEPSKADNE.

This sequence belongs to the 14-3-3 family. In terms of assembly, homodimer.

This Solanum lycopersicum (Tomato) protein is 14-3-3 protein 5 (TFT5).